The sequence spans 249 residues: MAGHSQFKNIMHRKGAQDAKRAKQFAKVLREITVATRSGLPDPTSNPRLRAAISMAREVNMPKDNVERAIKKASGAAGGDDYVEVRYEGYGPAGVAIIVEGLTDNRNRTAGEVRAAFSKHGGSLGETNSVSFMFQRLGVISYPLDVASEDEMLEAAIEAGADNAETTEEGHEVTCAMENFFAVRDALESRFGEPQSAKLDWRPENSVTLDEDKARSVMKLIDVLEDSDDIQAVYANFDIPDDVAEALAA.

The protein belongs to the TACO1 family.

It is found in the cytoplasm. This is Probable transcriptional regulatory protein GOX1679 from Gluconobacter oxydans (strain 621H) (Gluconobacter suboxydans).